We begin with the raw amino-acid sequence, 135 residues long: uncharacterized protein (135 aa).

This is an uncharacterized protein from Commelina yellow mottle virus (CoYMV).